Consider the following 272-residue polypeptide: F-actin-capping protein subunit beta (272 aa).

Position 2 is an N-acetylserine (S2). S2 is modified (phosphoserine). Residue K235 is modified to N6-acetyllysine. A Phosphoserine modification is found at V263.

This sequence belongs to the F-actin-capping protein beta subunit family. Component of the F-actin capping complex, composed of a heterodimer of an alpha and a beta subunit. Subunit of dynactin, a multiprotein complex part of a tripartite complex with dynein and a adapter, such as BICDL1, BICD2 or HOOK3. The dynactin complex is built around ACTR1A/ACTB filament and consists of an actin-related filament composed of a shoulder domain, a pointed end and a barbed end. Its length is defined by its flexible shoulder domain. The soulder is composed of 2 DCTN1 subunits, 4 DCTN2 and 2 DCTN3. The 4 DCNT2 (via N-terminus) bind the ACTR1A filament and act as molecular rulers to determine the length. The pointed end is important for binding dynein-dynactin cargo adapters. Consists of 4 subunits: ACTR10, DCNT4, DCTN5 and DCTN6. The barbed end is composed of a CAPZA1:CAPZB heterodimers, which binds ACTR1A/ACTB filament and dynactin and stabilizes dynactin. Interacts with ARHGAP17. Interaction with RCSD1/CAPZIP. Component of the WASH complex, composed of F-actin-capping protein subunit alpha (CAPZA1, CAPZA2 or CAPZA3), F-actin-capping protein subunit beta (CAPZB), WASH (WASHC1, WASH2P, WASH3P, WASH4P, WASH5P or WASH6P), WASHC2 (WASHC2A or WASHC2C), WASHC3, WASHC4 and WASHC5. Interacts with ACTG1. Directly interacts with CRACD; this interaction decreases binding to actin.

It localises to the cytoplasm. The protein localises to the cytoskeleton. It is found in the myofibril. The protein resides in the sarcomere. In terms of biological role, F-actin-capping proteins bind in a Ca(2+)-independent manner to the fast growing ends of actin filaments (barbed end) thereby blocking the exchange of subunits at these ends. Unlike other capping proteins (such as gelsolin and severin), these proteins do not sever actin filaments. Plays a role in the regulation of cell morphology and cytoskeletal organization. Forms, with CAPZB, the barbed end of the fast growing ends of actin filaments in the dynactin complex and stabilizes dynactin structure. The dynactin multiprotein complex activates the molecular motor dynein for ultra-processive transport along microtubules. This chain is F-actin-capping protein subunit beta, found in Homo sapiens (Human).